We begin with the raw amino-acid sequence, 80 residues long: MTNTKTLEANISFEEALKELEEIVKKIDKGQESLETAVNSFERGILLKNHCEKKLKEARLKIEKITKLADSTVVLEEMEV.

This sequence belongs to the XseB family. In terms of assembly, heterooligomer composed of large and small subunits.

It localises to the cytoplasm. It catalyses the reaction Exonucleolytic cleavage in either 5'- to 3'- or 3'- to 5'-direction to yield nucleoside 5'-phosphates.. Bidirectionally degrades single-stranded DNA into large acid-insoluble oligonucleotides, which are then degraded further into small acid-soluble oligonucleotides. This Rickettsia africae (strain ESF-5) protein is Exodeoxyribonuclease 7 small subunit.